Consider the following 3225-residue polypeptide: Intermembrane lipid transfer protein VPS13 (3225 aa).

The interval 1 to 1390 is involved in phospholipid binding; it reads MLEGLVAGLL…VFAADVEQHT (1390 aa). The Chorein N-terminal domain maps to 2 to 115; that stretch reads LEGLVAGLLN…RHRLKMEKLD (114 aa). Disordered regions lie at residues 1568 to 1610 and 1768 to 1799; these read PEAP…QQLV and AGLK…SHSG. Over residues 1590–1610 the composition is skewed to low complexity; it reads VRVGSSGRHSESSAGSGQQLV. The span at 1777-1799 shows a compositional bias: polar residues; that stretch reads GKGTSTLATRTRHASQSAASHSG. In terms of domain architecture, SHR-BD spans 2290-2570; the sequence is FKVTVYSPYV…PYAWDFPAAK (281 aa).

This sequence belongs to the VPS13 family.

Its subcellular location is the membrane. In terms of biological role, mediates the transfer of lipids between membranes at organelle contact sites. Binds phospholipids, including phosphatidylcholine (PC), phosphatidylethanolamine (PE), phosphatidic acid (PA), and phosphatidylserine (PS). May play a role in mitochondrial lipid homeostasis, Golgi vesicle transport, reticulophagy, actin cytoskeleton organization and formation of the prospore membrane. In Chaetomium thermophilum (strain DSM 1495 / CBS 144.50 / IMI 039719) (Thermochaetoides thermophila), this protein is Intermembrane lipid transfer protein VPS13.